Reading from the N-terminus, the 273-residue chain is Phosphate import ATP-binding protein PstB (273 aa).

Residues Leu19–Ala258 enclose the ABC transporter domain. Residue Gly51 to Ser58 participates in ATP binding.

The protein belongs to the ABC transporter superfamily. Phosphate importer (TC 3.A.1.7) family. As to quaternary structure, the complex is composed of two ATP-binding proteins (PstB), two transmembrane proteins (PstC and PstA) and a solute-binding protein (PstS).

It is found in the cell inner membrane. The catalysed reaction is phosphate(out) + ATP + H2O = ADP + 2 phosphate(in) + H(+). In terms of biological role, part of the ABC transporter complex PstSACB involved in phosphate import. Responsible for energy coupling to the transport system. The sequence is that of Phosphate import ATP-binding protein PstB from Synechococcus sp. (strain CC9605).